Consider the following 309-residue polypeptide: Mitogen-activated protein kinase kinase 8 (309 aa).

A Protein kinase domain is found at 53–305 (LDRISVLGSG…ASQLLNHPFL (253 aa)). Residues 59 to 67 (LGSGNGGTV) and lysine 82 contribute to the ATP site. Aspartate 167 serves as the catalytic Proton acceptor. Serine 195 and serine 201 each carry phosphoserine. Residue threonine 205 is modified to Phosphothreonine.

Belongs to the protein kinase superfamily. STE Ser/Thr protein kinase family. MAP kinase kinase subfamily. Phosphorylation at Ser-195 and Ser-201 by MAP kinase kinase kinases positively regulates kinase activity.

The enzyme catalyses L-seryl-[protein] + ATP = O-phospho-L-seryl-[protein] + ADP + H(+). The catalysed reaction is L-threonyl-[protein] + ATP = O-phospho-L-threonyl-[protein] + ADP + H(+). It catalyses the reaction L-tyrosyl-[protein] + ATP = O-phospho-L-tyrosyl-[protein] + ADP + H(+). This is Mitogen-activated protein kinase kinase 8 (MKK8) from Arabidopsis thaliana (Mouse-ear cress).